The chain runs to 277 residues: Phosphoenolpyruvate synthase regulatory protein (277 aa).

157 to 164 (GVSRCGKT) contacts ADP.

It belongs to the pyruvate, phosphate/water dikinase regulatory protein family. PSRP subfamily.

It catalyses the reaction [pyruvate, water dikinase] + ADP = [pyruvate, water dikinase]-phosphate + AMP + H(+). It carries out the reaction [pyruvate, water dikinase]-phosphate + phosphate + H(+) = [pyruvate, water dikinase] + diphosphate. Bifunctional serine/threonine kinase and phosphorylase involved in the regulation of the phosphoenolpyruvate synthase (PEPS) by catalyzing its phosphorylation/dephosphorylation. This Shigella boydii serotype 4 (strain Sb227) protein is Phosphoenolpyruvate synthase regulatory protein.